An 827-amino-acid chain; its full sequence is Mitogen-activated protein kinase kinase kinase kinase 1 (827 aa).

The Protein kinase domain maps to 17–274 (YDLLQRLGGG…ATKMLSHQLV (258 aa)). ATP-binding positions include 23 to 31 (LGGGTYGEV) and K46. D137 functions as the Proton acceptor in the catalytic mechanism. Residue T165 is modified to Phosphothreonine; by autocatalysis. At S171 the chain carries Phosphoserine; by autocatalysis. T175 carries the phosphothreonine; by autocatalysis modification. A disordered region spans residues 296–315 (KGLPVDIEDEEPEPPPAIPR). The residue at position 354 (T354) is a Phosphothreonine; by autocatalysis. Residues 359–485 (PPAHFGSTSP…KMRGKMENEK (127 aa)) form a disordered region. Residues S373, S375, S403, S405, and S419 each carry the phosphoserine modification. Acidic residues predominate over residues 374 to 383 (DSDDDYDDVD). Composition is skewed to pro residues over residues 429–443 (GPPP…PPAT) and 461–471 (APEPGQPPLVP). The span at 472–485 (PRKEKMRGKMENEK) shows a compositional bias: basic and acidic residues. A CNH domain is found at 501 to 806 (PLQIHSTAAW…TFRLLCSPRP (306 aa)). Position 592 is a phosphoserine (S592).

The protein belongs to the protein kinase superfamily. STE Ser/Thr protein kinase family. STE20 subfamily. As to quaternary structure, interacts with MAP3K1. Interacts with FBXW8. Interacts with CLNK (via its SH2 domain). Requires Mg(2+) as cofactor. In terms of processing, autophosphorylates: phosphorylation promotes ubiquitination by the Cul7-RING(FBXW8) ubiquitin-protein ligase complex, leading to its degradation by the proteasome. Tyrosine-phosphorylated after activation of hemopoietic cells. Post-translationally, ubiquitinated by the Cul7-RING(FBXW8) ubiquitin-protein ligase complex following autophosphorylation, leading to its degradation by the proteasome. In terms of tissue distribution, expressed in hemopoietic cells (at protein level). Ubiquitously expressed in all tissues examined at embryonic stage 16.5 dpc with high levels in lung, heart and fetal liver. In the neonate, expression is restricted to the tissues which undergo lineage decisions, lung, thymus, liver, kidney and brain. In the adult, expression is limited to hemopoietic organs, thymus, bone marrow, and spleen and to the testis.

The catalysed reaction is L-seryl-[protein] + ATP = O-phospho-L-seryl-[protein] + ADP + H(+). It catalyses the reaction L-threonyl-[protein] + ATP = O-phospho-L-threonyl-[protein] + ADP + H(+). Functionally, serine/threonine-protein kinase, which plays a role in the response to environmental stress. Appears to act upstream of the JUN N-terminal pathway. Activator of the Hippo signaling pathway which plays a pivotal role in organ size control and tumor suppression by restricting proliferation and promoting apoptosis. MAP4Ks act in parallel to and are partially redundant with STK3/MST2 and STK4/MST2 in the phosphorylation and activation of LATS1/2, and establish MAP4Ks as components of the expanded Hippo pathway. May play a role in hematopoietic lineage decisions and growth regulation. Together with CLNK, it enhances CD3-triggered activation of T-cells and subsequent IL2 production. This chain is Mitogen-activated protein kinase kinase kinase kinase 1 (Map4k1), found in Mus musculus (Mouse).